The primary structure comprises 215 residues: Interleukin-12 subunit alpha (215 aa).

The N-terminal stretch at 1-22 is a signal peptide; sequence MCQSRYLLFLATLALLNHLSLA. 3 cysteine pairs are disulfide-bonded: Cys33–Cys106, Cys60–Cys192, and Cys81–Cys119. Residue Asn89 is glycosylated (N-linked (GlcNAc...) asparagine).

This sequence belongs to the IL-6 superfamily. As to quaternary structure, heterodimer with IL12B; disulfide-linked. This heterodimer is known as interleukin IL-12. Heterodimer with EBI3/IL27B; not disulfide-linked. This heterodimer is known as interleukin IL-35. Interacts with NBR1; this interaction promotes IL-12 secretion.

The protein resides in the secreted. Functionally, heterodimerizes with IL12B to form the IL-12 cytokine or with EBI3/IL27B to form the IL-35 cytokine. IL-12 is primarily produced by professional antigen-presenting cells (APCs) such as B-cells and dendritic cells (DCs) as well as macrophages and granulocytes and regulates T-cell and natural killer-cell responses, induces the production of interferon-gamma (IFN-gamma), favors the differentiation of T-helper 1 (Th1) cells and is an important link between innate resistance and adaptive immunity. Mechanistically, exerts its biological effects through a receptor composed of IL12R1 and IL12R2 subunits. Binding to the receptor results in the rapid tyrosine phosphorylation of a number of cellular substrates including the JAK family kinases TYK2 and JAK2. In turn, recruited STAT4 gets phosphorylated and translocates to the nucleus where it regulates cytokine/growth factor responsive genes. As part of IL-35, plays essential roles in maintaining the immune homeostasis of the liver microenvironment and also functions as an immune-suppressive cytokine. Mediates biological events through unconventional receptors composed of IL12RB2 and gp130/IL6ST heterodimers or homodimers. Signaling requires the transcription factors STAT1 and STAT4, which form a unique heterodimer that binds to distinct DNA sites. The sequence is that of Interleukin-12 subunit alpha (Il12a) from Mus musculus (Mouse).